Reading from the N-terminus, the 358-residue chain is UDP-3-O-acylglucosamine N-acyltransferase (358 aa).

Residue histidine 248 is the Proton acceptor of the active site.

This sequence belongs to the transferase hexapeptide repeat family. LpxD subfamily. As to quaternary structure, homotrimer.

The enzyme catalyses a UDP-3-O-[(3R)-3-hydroxyacyl]-alpha-D-glucosamine + a (3R)-hydroxyacyl-[ACP] = a UDP-2-N,3-O-bis[(3R)-3-hydroxyacyl]-alpha-D-glucosamine + holo-[ACP] + H(+). It functions in the pathway bacterial outer membrane biogenesis; LPS lipid A biosynthesis. Its function is as follows. Catalyzes the N-acylation of UDP-3-O-acylglucosamine using 3-hydroxyacyl-ACP as the acyl donor. Is involved in the biosynthesis of lipid A, a phosphorylated glycolipid that anchors the lipopolysaccharide to the outer membrane of the cell. This chain is UDP-3-O-acylglucosamine N-acyltransferase, found in Synechococcus sp. (strain WH7803).